A 266-amino-acid chain; its full sequence is UPF0328 protein ECU03_0130 (266 aa).

Belongs to the UPF0328 family.

This is UPF0328 protein ECU03_0130 from Encephalitozoon cuniculi (strain GB-M1) (Microsporidian parasite).